A 281-amino-acid chain; its full sequence is MASSSILIPPILTRRNLLLSTTIATVTPPPPAKPPSPDITITDRVFLDFSLCPTYFRSDPSATLSSTTPCSDSTPLGRVVLGLYGRHVPITVSTFKRMCTSSSTSYKNTPVHKIFPGQYFLAGRQGGGRRDTAEVGYSLRDLPRNTDVVNSKAFLLPHARAGVVSLCLSENDDDDDIRLDPDYRNVEFLITTGPGPSPQLDGGNIVFGTVLEGLDVVTSISSIPTYKPSENIKQFNDFAEFLGDERAQNARSLWNRPLKTVFISGCGELKVTNPSLSPTLP.

The N-terminal 24 residues, 1-24 (MASSSILIPPILTRRNLLLSTTIA), are a transit peptide targeting the chloroplast. The 203-residue stretch at 66 to 268 (STTPCSDSTP…KTVFISGCGE (203 aa)) folds into the PPIase cyclophilin-type domain.

The protein belongs to the cyclophilin-type PPIase family. Post-translationally, S-nytrosylated during the hypersensitive disease resistance response. Ubiquitous. Not detected in roots.

It is found in the plastid. It localises to the chloroplast. The enzyme catalyses [protein]-peptidylproline (omega=180) = [protein]-peptidylproline (omega=0). PPIases accelerate the folding of proteins. It catalyzes the cis-trans isomerization of proline imidic peptide bonds in oligopeptides. The chain is Peptidyl-prolyl cis-trans isomerase CYP28, chloroplastic (CYP28) from Arabidopsis thaliana (Mouse-ear cress).